We begin with the raw amino-acid sequence, 364 residues long: Peptide chain release factor 1 (364 aa).

Gln-237 is modified (N5-methylglutamine).

This sequence belongs to the prokaryotic/mitochondrial release factor family. In terms of processing, methylated by PrmC. Methylation increases the termination efficiency of RF1.

Its subcellular location is the cytoplasm. In terms of biological role, peptide chain release factor 1 directs the termination of translation in response to the peptide chain termination codons UAG and UAA. The chain is Peptide chain release factor 1 from Rubrobacter xylanophilus (strain DSM 9941 / JCM 11954 / NBRC 16129 / PRD-1).